A 124-amino-acid chain; its full sequence is Replication restart protein PriB (124 aa).

Residues 12-112 (IDNCLILSGS…VHAEHIEFID (101 aa)) enclose the SSB domain.

The protein belongs to the PriB family. Homodimer. Interacts with PriA and DnaT. Component of the replication restart primosome. Primosome assembly occurs via a 'hand-off' mechanism. PriA binds to replication forks, subsequently PriB then DnaT bind; DnaT then displaces ssDNA to generate the helicase loading substrate.

Functionally, involved in the restart of stalled replication forks, which reloads the replicative helicase on sites other than the origin of replication; the PriA-PriB pathway is the major replication restart pathway. During primosome assembly it facilitates complex formation between PriA and DnaT on DNA; stabilizes PriA on DNA. Stimulates the DNA unwinding activity of PriA helicase. The polypeptide is Replication restart protein PriB (Actinobacillus pleuropneumoniae serotype 5b (strain L20)).